The sequence spans 34 residues: Beta-theraphotoxin-Pmu1a (34 aa).

3 cysteine pairs are disulfide-bonded: C3–C18, C10–C23, and C17–C30. L34 carries the leucine amide modification.

The protein belongs to the neurotoxin 10 (Hwtx-1) family. 34 (Jztx-26) subfamily. In terms of tissue distribution, expressed by the venom gland.

The protein localises to the secreted. Functionally, spider venom neurotoxin that blocks voltage-gated sodium channels Nav1.3/SCN3A and Nav1.8/SCN10A in human (IC(50)=2 uM and IC(50)=4 uM, respectively) and rat (IC(50)=2 uM and IC(50)=2.5 uM, respectively). This is Beta-theraphotoxin-Pmu1a from Pterinochilus murinus (Mombasa golden starburst baboon spider).